Reading from the N-terminus, the 987-residue chain is Voltage-gated delayed rectifier potassium channel KCNH1 (987 aa).

Over 1-220 (MTMAGGRKGL…LHYCVFKTTW (220 aa)) the chain is Cytoplasmic. One can recognise a PAS domain in the interval 14-94 (QNTFLENIVR…QTFENYEMNS (81 aa)). A PAC domain is found at 93–145 (NSFEILMYKKNRTPVWFFVKIAPIRNEQDKVVLFLCTFSDITAFKQPIEDDSC). The required for phosphatidylinositol bisphosphate binding stretch occupies residues 151–162 (FARLTRALTSSR). Residues 221-241 (DWIILILTFYTAILVPYNVSF) form a helical membrane-spanning segment. Residues 242-248 (KTRQNNV) are Extracellular-facing. Residues 249–269 (AWLVVDSIVDVIFLVDIVLNF) form a helical membrane-spanning segment. Topologically, residues 270-290 (HTTFVGPAGEVISDPKLIRMN) are cytoplasmic. The helical transmembrane segment at 291 to 309 (YLKTWFVIDLLSCLPYDVI) threads the bilayer. Residues 310–345 (NAFENVDEVSAFMGDPGKIGFADQIPPPLEGRESQG) lie on the Extracellular side of the membrane. The helical; Voltage-sensor transmembrane segment at 346 to 368 (ISSLFSSLKVVRLLRLGRVARKL) threads the bilayer. Topologically, residues 369–377 (DHYIEYGAA) are cytoplasmic. Residues 378–399 (VLVLLVCVFGLAAHWMACIWYS) form a helical membrane-spanning segment. Residues 400-448 (IGDYEIFDEDTKTIRNNSWLYQLAMDIGTPYQFNGSGSGKWEGGPSKNS) lie on the Extracellular side of the membrane. N-linked (GlcNAc...) asparagine glycosylation is found at Asn-415 and Asn-433. Residues 449–470 (VYISSLYFTMTSLTSVGFGNIA) constitute an intramembrane region (pore-forming). The Selectivity filter motif lies at 463–468 (SVGFGN). The Extracellular portion of the chain corresponds to 471–477 (PSTDIEK). A helical transmembrane segment spans residues 478-498 (IFAVAIMMIGSLLYATIFGNV). Residues 499–987 (TTIFQQMYAN…ESERDIFGAS (489 aa)) are Cytoplasmic-facing. Residues 673-770 (KRDALQKVLE…LDDLDVEKGS (98 aa)) form a calmodulin-binding region. Positions 699-701 (YNL) are interaction with cyclic nucleotide-binding pocket. The CAD (involved in subunit assembly) stretch occupies residues 922–962 (AAVLEVKHELKEDIKALSTKMTSIEKQLSEILRILTSRRSS). Residues 960-987 (RSSQSPQELFEISRPQSPESERDIFGAS) form a disordered region. A phosphoserine mark is found at Ser-972, Ser-976, and Ser-979. The span at 978 to 987 (ESERDIFGAS) shows a compositional bias: basic and acidic residues.

Belongs to the potassium channel family. H (Eag) (TC 1.A.1.20) subfamily. Kv10.1/KCNH1 sub-subfamily. As to quaternary structure, homomultimer. The potassium channel is composed of a homo- or heterotetrameric complex of pore-forming alpha subunits that can associate with modulating beta subunits. Heteromultimer with KCNH5/EAG2. Interacts with ALG10B. Interacts with RABEP1. Interacts (via C-terminus) with CTTN. Interacts (via C-terminal cytoplasmic region) with Ca(2+)-bound calmodulin. Post-translationally, channel activity is regulated via tyrosine phosphorylation/dephosphorylation by SRC and PTPN6. As to expression, detected in cerebellum, cortex and retina.

It localises to the cell membrane. The protein localises to the nucleus inner membrane. Its subcellular location is the cell projection. The protein resides in the dendrite. It is found in the axon. It localises to the presynaptic cell membrane. The protein localises to the perikaryon. Its subcellular location is the postsynaptic density membrane. The protein resides in the early endosome membrane. It catalyses the reaction K(+)(in) = K(+)(out). Channel activity is inhibited by interaction with Ca(2+)-bound calmodulin. Interaction of a single pore-forming alpha subunit with a calmodulin chain is sufficient to promote channel closure. Extracellular magnesium ion concentrations up to 4 mM modulate channel activity by slowing down current activation in a reversible fashion. Channel activity is not regulated by cyclic nucleotides. Channel activity is inhibited by binding intracellular phosphatidylinositol-3,5-bisphosphate and phosphatidylinositol-4,5-bisphosphate (PIP2), but is not inhibited by phosphatidylinositol 4-phosphate. In terms of biological role, pore-forming (alpha) subunit of a voltage-gated delayed rectifier potassium channel that mediates outward-rectifying potassium currents which, on depolarization, reaches a steady-state level and do not inactivate. The activation kinetics depend on the prepulse potential and external divalent cation concentration. With negative prepulses, the current activation is delayed and slowed down several fold, whereas more positive prepulses speed up activation. The time course of activation is biphasic with a fast and a slowly activating current component. Activates at more positive membrane potentials and exhibit a steeper activation curve. Channel properties are modulated by subunit assembly. Mediates IK(NI) current in myoblasts. Involved in the regulation of cell proliferation and differentiation, in particular adipogenic and osteogenic differentiation in bone marrow-derived mesenchymal stem cells (MSCs). The polypeptide is Voltage-gated delayed rectifier potassium channel KCNH1 (Bos taurus (Bovine)).